The sequence spans 207 residues: Outer-membrane lipoprotein LolB (207 aa).

The first 21 residues, 1-21 (MTLPDFRLIRLLPLASLVLTA), serve as a signal peptide directing secretion. C22 carries N-palmitoyl cysteine lipidation. The S-diacylglycerol cysteine moiety is linked to residue C22.

The protein belongs to the LolB family. As to quaternary structure, monomer.

The protein localises to the cell outer membrane. Its function is as follows. Plays a critical role in the incorporation of lipoproteins in the outer membrane after they are released by the LolA protein. The polypeptide is Outer-membrane lipoprotein LolB (Citrobacter koseri (strain ATCC BAA-895 / CDC 4225-83 / SGSC4696)).